Here is a 242-residue protein sequence, read N- to C-terminus: ATP synthase subunit a (242 aa).

Transmembrane regions (helical) follow at residues 29–49, 84–104, 114–134, 140–160, 181–201, and 203–223; these read SSIY…LAFY, FIPL…LGMT, IIVT…VGFV, FLTL…MIVI, MAGH…MIYL, and FLPI…AILQ.

The protein belongs to the ATPase A chain family. F-type ATPases have 2 components, CF(1) - the catalytic core - and CF(0) - the membrane proton channel. CF(1) has five subunits: alpha(3), beta(3), gamma(1), delta(1), epsilon(1). CF(0) has three main subunits: a(1), b(2) and c(9-12). The alpha and beta chains form an alternating ring which encloses part of the gamma chain. CF(1) is attached to CF(0) by a central stalk formed by the gamma and epsilon chains, while a peripheral stalk is formed by the delta and b chains.

It is found in the cell membrane. In terms of biological role, key component of the proton channel; it plays a direct role in the translocation of protons across the membrane. In Rickettsia africae (strain ESF-5), this protein is ATP synthase subunit a.